A 336-amino-acid polypeptide reads, in one-letter code: Protein FPV127 (336 aa).

Residues 1–22 are disordered; the sequence is MGGGLVLPTRDPPKEQDTSETA.

This sequence belongs to the poxviruses A16/G9/J5 family.

This Vertebrata (FPV) protein is Protein FPV127.